Here is a 235-residue protein sequence, read N- to C-terminus: Probable pyridoxal 5'-phosphate synthase subunit PDX1 (235 aa).

Lysine 16 acts as the Schiff-base intermediate with D-ribose 5-phosphate in catalysis. Residue arginine 104 participates in D-glyceraldehyde 3-phosphate binding. Residues glycine 153 and 174–175 contribute to the D-ribose 5-phosphate site; that span reads GS.

This sequence belongs to the PdxS/SNZ family.

The enzyme catalyses aldehydo-D-ribose 5-phosphate + D-glyceraldehyde 3-phosphate + L-glutamine = pyridoxal 5'-phosphate + L-glutamate + phosphate + 3 H2O + H(+). It participates in cofactor biosynthesis; pyridoxal 5'-phosphate biosynthesis. Its function is as follows. Catalyzes the formation of pyridoxal 5'-phosphate from ribose 5-phosphate (RBP), glyceraldehyde 3-phosphate (G3P) and ammonia. The ammonia is provided by PDX2. Can also use ribulose 5-phosphate and dihydroxyacetone phosphate as substrates, resulting from enzyme-catalyzed isomerization of RBP and G3P, respectively. Also plays an indirect role in resistance to singlet oxygen-generating photosensitizers. This is Probable pyridoxal 5'-phosphate synthase subunit PDX1 from Stellaria longipes (Longstalk starwort).